The primary structure comprises 619 residues: Nuclear hormone receptor family member nhr-6 (619 aa).

The segment covering methionine 1 to cysteine 18 has biased composition (polar residues). Disordered regions lie at residues methionine 1 to serine 29, methionine 58 to threonine 86, glutamine 103 to proline 134, and glutamine 196 to proline 232. Residues serine 19 to serine 29 are compositionally biased toward low complexity. Over residues lysine 125 to proline 134 the composition is skewed to polar residues. Over residues glycine 206–proline 232 the composition is skewed to low complexity. Residues aspartate 265–histidine 340 constitute a DNA-binding region (nuclear receptor). 2 consecutive NR C4-type zinc fingers follow at residues cysteine 268 to cysteine 288 and cysteine 304 to cysteine 328. The disordered stretch occupies residues glycine 345–proline 365. A compositionally biased stretch (basic residues) spans arginine 346–leucine 356. The region spanning proline 365–serine 600 is the NR LBD domain. Residues leucine 589 to serine 600 form an AF-2 region.

This sequence belongs to the nuclear hormone receptor family. NR4 subfamily. In terms of tissue distribution, in hermaphrodites, expressed in the developing spermatheca and dorsal uterus. Expression includes the 8 cells of the dorsal somatic gonad primordium and the sujc cells that form the core of the spermatheca-uterine valve. Expressed in the precursor cells of the spermatheca-sheath lineages (SS cells) and in the precursors and descendents of the dorsal-uterine lineage (DU cells). In both hermaphroditic and male animals, expressed in a pair of head chemosensory neurons.

It localises to the nucleus. Its function is as follows. Transcriptional activator that induces gene expression by binding to the NGFI-B response element (NBRE) 5'-AAAGGTCA-3'. Required for proper morphogenesis of the spermatheca and the spermatheca-uterine valve formation. Promotes cell proliferation and differentiation of the spermatheca precursor cells during spermatheca development in larval stage L4. Might play a role in promoting G1/S phase progression in the spermatheca precursor cell lineage. Also required for the differentiation of the spermatheca-uterine junction core (sujc) cells which are generating the spermatheca-uterine valve. This Caenorhabditis elegans protein is Nuclear hormone receptor family member nhr-6 (nhr-6).